The sequence spans 429 residues: Phosphomethylpyrimidine synthase 1 (429 aa).

Substrate is bound by residues N65, M94, Y123, H162, 184–186, 225–228, and E264; these read SRG and DGLR. Position 268 (H268) interacts with Zn(2+). A substrate-binding site is contributed by Y291. H332 is a Zn(2+) binding site. 3 residues coordinate [4Fe-4S] cluster: C408, C411, and C415.

The protein belongs to the ThiC family. It depends on [4Fe-4S] cluster as a cofactor.

It catalyses the reaction 5-amino-1-(5-phospho-beta-D-ribosyl)imidazole + S-adenosyl-L-methionine = 4-amino-2-methyl-5-(phosphooxymethyl)pyrimidine + CO + 5'-deoxyadenosine + formate + L-methionine + 3 H(+). It participates in cofactor biosynthesis; thiamine diphosphate biosynthesis. Its function is as follows. Catalyzes the synthesis of the hydroxymethylpyrimidine phosphate (HMP-P) moiety of thiamine from aminoimidazole ribotide (AIR) in a radical S-adenosyl-L-methionine (SAM)-dependent reaction. This is Phosphomethylpyrimidine synthase 1 from Methanosphaera stadtmanae (strain ATCC 43021 / DSM 3091 / JCM 11832 / MCB-3).